A 60-amino-acid polypeptide reads, in one-letter code: Mastoparan-VT1 (60 aa).

The first 25 residues, 1 to 25 (MKNTILILFTAFIALLGFFGMSAEA), serve as a signal peptide directing secretion. Residues 26–45 (LADLKADPLAGPNPDADPEA) constitute a propeptide that is removed on maturation. AXPX repeat units lie at residues 31–34 (ADPL), 35–38 (AGPN), and 41–44 (ADPE). At leucine 59 the chain carries Leucine amide.

This sequence belongs to the MCD family. Mastoparan subfamily. As to expression, expressed by the venom gland.

The protein localises to the secreted. Antimicrobial peptide with activities against Gram-negative and Gram-positive bacteria and the fungi C.albicans and C.parapsilosis. Exhibits little hemolytic activity against washed human erythrocytes. Also acts as a mast cell degranulating peptide. Its mast cell degranulation activity may be related to the activation of G-protein coupled receptors in mast cells as well as interaction with other proteins located in cell endosomal membranes in the mast cells. In terms of biological role, antimicrobial peptide with activities against Gram-negative and Gram-positive bacteria and the fungi C.albicans and C.parapsilosis. Exhibits little hemolytic activity against washed human erythrocytes. Also acts as a mast cell degranulating peptide. In Vespa tropica (Greater banded hornet), this protein is Mastoparan-VT1.